Here is a 621-residue protein sequence, read N- to C-terminus: UvrABC system protein C (621 aa).

The GIY-YIG domain maps to 20–98; that stretch reads MAPGVYCMYA…IKSLAPRYNV (79 aa). Residues 207–242 form the UVR domain; that stretch reads DLLAEELIQAMQVASEHLEFEQAARLRDLLTSLRSM.

It belongs to the UvrC family. In terms of assembly, interacts with UvrB in an incision complex.

The protein resides in the cytoplasm. In terms of biological role, the UvrABC repair system catalyzes the recognition and processing of DNA lesions. UvrC both incises the 5' and 3' sides of the lesion. The N-terminal half is responsible for the 3' incision and the C-terminal half is responsible for the 5' incision. The sequence is that of UvrABC system protein C from Xylella fastidiosa (strain 9a5c).